A 365-amino-acid chain; its full sequence is tRNA(Met) cytidine acetate ligase (365 aa).

ATP-binding positions include 7–20 (IAEFNPFHNGHKYL), G96, N152, and R175.

The protein belongs to the TmcAL family.

The protein resides in the cytoplasm. The enzyme catalyses cytidine(34) in elongator tRNA(Met) + acetate + ATP = N(4)-acetylcytidine(34) in elongator tRNA(Met) + AMP + diphosphate. Functionally, catalyzes the formation of N(4)-acetylcytidine (ac(4)C) at the wobble position of elongator tRNA(Met), using acetate and ATP as substrates. First activates an acetate ion to form acetyladenylate (Ac-AMP) and then transfers the acetyl group to tRNA to form ac(4)C34. The protein is tRNA(Met) cytidine acetate ligase of Streptococcus pneumoniae (strain Taiwan19F-14).